A 400-amino-acid polypeptide reads, in one-letter code: Tryptophan synthase beta chain (400 aa).

Residue K92 is modified to N6-(pyridoxal phosphate)lysine.

It belongs to the TrpB family. As to quaternary structure, tetramer of two alpha and two beta chains. It depends on pyridoxal 5'-phosphate as a cofactor.

The catalysed reaction is (1S,2R)-1-C-(indol-3-yl)glycerol 3-phosphate + L-serine = D-glyceraldehyde 3-phosphate + L-tryptophan + H2O. It functions in the pathway amino-acid biosynthesis; L-tryptophan biosynthesis; L-tryptophan from chorismate: step 5/5. Functionally, the beta subunit is responsible for the synthesis of L-tryptophan from indole and L-serine. In Neisseria gonorrhoeae (strain NCCP11945), this protein is Tryptophan synthase beta chain.